Reading from the N-terminus, the 130-residue chain is Small ribosomal subunit protein uS9 (130 aa).

Belongs to the universal ribosomal protein uS9 family.

This Salmonella paratyphi A (strain AKU_12601) protein is Small ribosomal subunit protein uS9.